The following is a 556-amino-acid chain: Membrane protein insertase YidC (556 aa).

A helical membrane pass occupies residues 5–25 (TLTAIVLSFVLLTAFQFYMAW). Positions 36–74 (QVQSGESSAPAPLASTAPVADALPPPVEGMAGSAPQQAM) are disordered. Low complexity predominate over residues 42–55 (SSAPAPLASTAPVA). The next 4 membrane-spanning stretches (helical) occupy residues 370–390 (NYGV…FPLA), 441–461 (LPIL…FLSV), 468–488 (FMLW…PLLM), and 510–530 (IMMF…SGLV).

It belongs to the OXA1/ALB3/YidC family. Type 1 subfamily. Interacts with the Sec translocase complex via SecD. Specifically interacts with transmembrane segments of nascent integral membrane proteins during membrane integration.

The protein localises to the cell inner membrane. Required for the insertion and/or proper folding and/or complex formation of integral membrane proteins into the membrane. Involved in integration of membrane proteins that insert both dependently and independently of the Sec translocase complex, as well as at least some lipoproteins. Aids folding of multispanning membrane proteins. The protein is Membrane protein insertase YidC of Magnetococcus marinus (strain ATCC BAA-1437 / JCM 17883 / MC-1).